Reading from the N-terminus, the 322-residue chain is Ferrochelatase (322 aa).

Residues histidine 193 and glutamate 274 each contribute to the Fe cation site.

Belongs to the ferrochelatase family.

The protein resides in the cytoplasm. It catalyses the reaction heme b + 2 H(+) = protoporphyrin IX + Fe(2+). It participates in porphyrin-containing compound metabolism; protoheme biosynthesis; protoheme from protoporphyrin-IX: step 1/1. In terms of biological role, catalyzes the ferrous insertion into protoporphyrin IX. The polypeptide is Ferrochelatase (Aliivibrio fischeri (strain MJ11) (Vibrio fischeri)).